Consider the following 282-residue polypeptide: Large ribosomal subunit protein uL2 (282 aa).

A disordered region spans residues 215-282 (RHKGIRPTVR…IIRSRKETKK (68 aa)). Over residues 263–282 (RNPKKPSTKLIIRSRKETKK) the composition is skewed to basic residues.

Belongs to the universal ribosomal protein uL2 family. In terms of assembly, part of the 50S ribosomal subunit. Forms a bridge to the 30S subunit in the 70S ribosome.

Its function is as follows. One of the primary rRNA binding proteins. Required for association of the 30S and 50S subunits to form the 70S ribosome, for tRNA binding and peptide bond formation. It has been suggested to have peptidyltransferase activity; this is somewhat controversial. Makes several contacts with the 16S rRNA in the 70S ribosome. The polypeptide is Large ribosomal subunit protein uL2 (Mesomycoplasma hyopneumoniae (strain 7448) (Mycoplasma hyopneumoniae)).